The chain runs to 554 residues: Calcium/calmodulin-dependent protein kinase type II delta 2 chain (554 aa).

In terms of domain architecture, Protein kinase spans Tyr13–Ile271. ATP-binding positions include Leu19 to Val27 and Lys42. Asp135 (proton acceptor) is an active-site residue. Thr286 bears the Phosphothreonine mark. Phosphoserine is present on residues Ser314 and Ser318. Disordered stretches follow at residues Pro324 to Asp375 and Trp392 to Gln413. The span at Asn330–Lys340 shows a compositional bias: polar residues. Thr372 carries the phosphothreonine modification.

Belongs to the protein kinase superfamily. CAMK Ser/Thr protein kinase family. CaMK subfamily. CAMK2 is composed of four different chains: alpha, beta, gamma, and delta. The different isoforms assemble into homo- or heteromultimeric holoenzymes composed of 8 to 12 subunits. In terms of tissue distribution, first detected at 18 hpf. At 24 hpf, expressed in discrete anterior locations and along either side of the midline. At 48 hpf, expression is predominantly in the forebrain, and then accumulates in the forebrain, hindbrain, and retinal epithelium at 72 hpf.

The enzyme catalyses L-seryl-[protein] + ATP = O-phospho-L-seryl-[protein] + ADP + H(+). The catalysed reaction is L-threonyl-[protein] + ATP = O-phospho-L-threonyl-[protein] + ADP + H(+). With respect to regulation, autophosphorylation of CAMK2 plays an important role in the regulation of the kinase activity. CaM-kinase II (CAMK2) is a prominent kinase in the central nervous system. The polypeptide is Calcium/calmodulin-dependent protein kinase type II delta 2 chain (camk2d2) (Danio rerio (Zebrafish)).